The sequence spans 597 residues: Replication protein E1 (597 aa).

Positions 75 to 77 (KRK) match the Nuclear localization signal motif. A phosphoserine; by host mark is found at Ser81, Ser91, and Ser104. The short motif at 90–99 (LSPQLASISL) is the Nuclear export signal element. Residues 119–141 (QSSNEADDSLEGQRQVEPLPGRE) form a disordered region. Residues 137-300 (LPGREENGAD…TLITHHLAAE (164 aa)) form a DNA-binding region region. An SF3 helicase domain is found at 400 to 550 (IEFILFLADF…FPLDDNGNPG (151 aa)). Residue 426–433 (GPPNTGKS) coordinates ATP. Lys507 participates in a covalent cross-link: Glycyl lysine isopeptide (Lys-Gly) (interchain with G-Cter in SUMO). The disordered stretch occupies residues 574 to 597 (PEDGEDGETQRGLRLTARGTTESV).

The protein belongs to the papillomaviridae E1 protein family. In terms of assembly, can form hexamers. Interacts with E2 protein; this interaction increases E1 DNA binding specificity. Interacts with host DNA polymerase subunit POLA2. Interacts with host single stranded DNA-binding protein RPA1. Interacts with host TOP1; this interaction stimulates the enzymatic activity of TOP1. Phosphorylated. In terms of processing, sumoylated.

It localises to the host nucleus. The catalysed reaction is Couples ATP hydrolysis with the unwinding of duplex DNA by translocating in the 3'-5' direction.. The enzyme catalyses ATP + H2O = ADP + phosphate + H(+). Its function is as follows. ATP-dependent DNA 3'-5' helicase required for initiation of viral DNA replication. It forms a complex with the viral E2 protein. The E1-E2 complex binds to the replication origin which contains binding sites for both proteins. During the initial step, a dimer of E1 interacts with a dimer of protein E2 leading to a complex that binds the viral origin of replication with high specificity. Then, a second dimer of E1 displaces the E2 dimer in an ATP-dependent manner to form the E1 tetramer. Following this, two E1 monomers are added to each half of the site, which results in the formation of two E1 trimers on the viral ori. Subsequently, two hexamers will be created. The double hexamer acts as a bi-directional helicase machinery and unwinds the viral DNA and then recruits the host DNA polymerase to start replication. The chain is Replication protein E1 from Canis lupus familiaris (Dog).